We begin with the raw amino-acid sequence, 349 residues long: Anthranilate phosphoribosyltransferase (349 aa).

5-phospho-alpha-D-ribose 1-diphosphate is bound by residues G86, 89-90 (GD), T94, 96-99 (NIST), 114-122 (KHGNKSASG), and S126. Position 86 (G86) interacts with anthranilate. A Mg(2+)-binding site is contributed by S98. N117 lines the anthranilate pocket. R172 is a binding site for anthranilate. Residues D231 and E232 each coordinate Mg(2+).

It belongs to the anthranilate phosphoribosyltransferase family. Homodimer. Mg(2+) is required as a cofactor.

The enzyme catalyses N-(5-phospho-beta-D-ribosyl)anthranilate + diphosphate = 5-phospho-alpha-D-ribose 1-diphosphate + anthranilate. It functions in the pathway amino-acid biosynthesis; L-tryptophan biosynthesis; L-tryptophan from chorismate: step 2/5. Its function is as follows. Catalyzes the transfer of the phosphoribosyl group of 5-phosphorylribose-1-pyrophosphate (PRPP) to anthranilate to yield N-(5'-phosphoribosyl)-anthranilate (PRA). This Prochlorococcus marinus (strain MIT 9312) protein is Anthranilate phosphoribosyltransferase.